The chain runs to 78 residues: Large ribosomal subunit protein bL28 (78 aa).

The interval 1 to 21 is disordered; it reads MSRVCQVTGKKPMVGNNRSHA.

This sequence belongs to the bacterial ribosomal protein bL28 family.

The protein is Large ribosomal subunit protein bL28 of Shewanella piezotolerans (strain WP3 / JCM 13877).